Reading from the N-terminus, the 308-residue chain is Regulating synaptic membrane exocytosis protein 3 (308 aa).

Positions serine 86–threonine 120 are disordered. Residues aspartate 109–threonine 120 are compositionally biased toward low complexity. In terms of domain architecture, C2 spans proline 156–tyrosine 274. Serine 295 and serine 298 each carry phosphoserine.

As to quaternary structure, binds PPFIA3. Does not bind RAB3.

Its subcellular location is the synapse. Functionally, regulates synaptic membrane exocytosis. This Homo sapiens (Human) protein is Regulating synaptic membrane exocytosis protein 3 (RIMS3).